The primary structure comprises 345 residues: Eukaryotic translation initiation factor 3 subunit F (345 aa).

An MPN domain is found at 30–166; it reads VVIHPQALFS…TRAYISAPVG (137 aa). The interval 308–345 is disordered; sequence GGESGNAESGQRGGQRGGKGGRGGQQRTQDRSGEEARA. Positions 318 to 331 are enriched in gly residues; it reads QRGGQRGGKGGRGG. Basic and acidic residues predominate over residues 335–345; sequence TQDRSGEEARA.

Belongs to the eIF-3 subunit F family. Component of the eukaryotic translation initiation factor 3 (eIF-3) complex.

The protein resides in the cytoplasm. Its function is as follows. Component of the eukaryotic translation initiation factor 3 (eIF-3) complex, which is involved in protein synthesis of a specialized repertoire of mRNAs and, together with other initiation factors, stimulates binding of mRNA and methionyl-tRNAi to the 40S ribosome. The eIF-3 complex specifically targets and initiates translation of a subset of mRNAs involved in cell proliferation. The sequence is that of Eukaryotic translation initiation factor 3 subunit F from Aspergillus oryzae (strain ATCC 42149 / RIB 40) (Yellow koji mold).